The following is a 502-amino-acid chain: Probable cytochrome P450 514A4 (502 aa).

A helical transmembrane segment spans residues I4 to L24. C448 provides a ligand contact to heme.

Belongs to the cytochrome P450 family. Heme serves as cofactor.

The protein resides in the membrane. The protein is Probable cytochrome P450 514A4 (cyp514A4) of Dictyostelium discoideum (Social amoeba).